We begin with the raw amino-acid sequence, 266 residues long: Glucosamine-6-phosphate deaminase (266 aa).

Asp-72 functions as the Proton acceptor; for enolization step in the catalytic mechanism. The active-site For ring-opening step is the Asp-141. His-143 acts as the Proton acceptor; for ring-opening step in catalysis. Glu-148 (for ring-opening step) is an active-site residue.

This sequence belongs to the glucosamine/galactosamine-6-phosphate isomerase family. NagB subfamily. Homohexamer.

The enzyme catalyses alpha-D-glucosamine 6-phosphate + H2O = beta-D-fructose 6-phosphate + NH4(+). The protein operates within amino-sugar metabolism; N-acetylneuraminate degradation; D-fructose 6-phosphate from N-acetylneuraminate: step 5/5. Allosterically activated by N-acetylglucosamine 6-phosphate (GlcNAc6P). In terms of biological role, catalyzes the reversible isomerization-deamination of glucosamine 6-phosphate (GlcN6P) to form fructose 6-phosphate (Fru6P) and ammonium ion. This Vibrio vulnificus (strain CMCP6) protein is Glucosamine-6-phosphate deaminase.